The chain runs to 215 residues: MNKYLEYPEVESKELPPQKLVVLLHGVGSDGHDLIGLVPYIKNDLPNCHFISPHGIEDYDMMPYGRQWFSLRDRSPHIIAKLIANNISKLEDIIREKQTELNLTNKDTVIIGFSQGTIIGLYLTLIQQKPLFCTIGFSGALIPPMKVNNKLTPICLIHGELDQVINVSEMYNASNYLSKLNIEHSGHKLTSLAHSIDGRGLEIAINFINTCHNIV.

Residues Ser114, Asp162, and His194 each act as charge relay system in the active site.

Belongs to the AB hydrolase superfamily. AB hydrolase 2 family.

This is an uncharacterized protein from Rickettsia prowazekii (strain Madrid E).